The sequence spans 153 residues: Pheromone-binding protein Gp-9 (153 aa).

The signal sequence occupies residues Met1–Ala19. Intrachain disulfides connect Cys37–Cys77, Cys73–Cys129, and Cys118–Cys138.

The protein belongs to the PBP/GOBP family. Homodimer.

It localises to the secreted. Its function is as follows. Colony queen number, a major feature of social organization, is associated with worker genotype for Gp-9. Colonies are headed by either a single reproductive queen (monogyne form) or multiple queens (polygyne form). Differences in worker Gp-9 genotypes between social forms may cause differences in workers' abilities to recognize queens and regulate their numbers. This Solenopsis daguerrei (Workerless parasitic ant) protein is Pheromone-binding protein Gp-9.